A 357-amino-acid chain; its full sequence is MTIFTRDFSHRILACVLLPLFLFQCLPYVTCQQGSESAGRNGKSKESSIIGIVLLSLFLLLLVVYCLNYGCCIEENETGGHEVLHSRVRRGIDKDVIESFPAFLYSEVKAFKIGNGGVECAICLCEFEDEEPLRWMPPCSHTFHANCIDEWLSSRSTCPVCRANLSLKSGDSFPHPSMDVETGNAQRGVQESPDERSLTGSSVTCNNNANYTTPRSRSTGLLSSWHVPELFLPRSHSTGHSLVQPCQNIDRFTLQLPEEVQRQLVSLNLIKRSHIALPRARSSRQGYRSGSVGNERTGFSQGRQTLRRAISTSLSFSFQPAPVRSTLDRDNLMRETSQANDKDFGERSFQRLMPEKN.

A signal peptide spans 1–31 (MTIFTRDFSHRILACVLLPLFLFQCLPYVTC). The chain crosses the membrane as a helical span at residues 47 to 67 (SSIIGIVLLSLFLLLLVVYCL). The RING-type; atypical zinc-finger motif lies at 120 to 162 (CAICLCEFEDEEPLRWMPPCSHTFHANCIDEWLSSRSTCPVCR). The tract at residues 172–210 (SFPHPSMDVETGNAQRGVQESPDERSLTGSSVTCNNNAN) is disordered. Over residues 198-210 (LTGSSVTCNNNAN) the composition is skewed to polar residues. Phosphoserine is present on serine 273. Disordered stretches follow at residues 281 to 304 (RSSR…QGRQ) and 327 to 357 (LDRD…PEKN). The span at 283–304 (SRQGYRSGSVGNERTGFSQGRQ) shows a compositional bias: polar residues. Basic and acidic residues predominate over residues 340–357 (NDKDFGERSFQRLMPEKN).

Belongs to the RING-type zinc finger family. ATL subfamily.

The protein resides in the membrane. The enzyme catalyses S-ubiquitinyl-[E2 ubiquitin-conjugating enzyme]-L-cysteine + [acceptor protein]-L-lysine = [E2 ubiquitin-conjugating enzyme]-L-cysteine + N(6)-ubiquitinyl-[acceptor protein]-L-lysine.. It participates in protein modification; protein ubiquitination. The sequence is that of Putative RING-H2 finger protein ATL37 (ATL37) from Arabidopsis thaliana (Mouse-ear cress).